Reading from the N-terminus, the 152-residue chain is Putative RING finger protein 157L (152 aa).

The segment at 111-146 (CVVCYENEICIKIQPCNHFVVCKSCFNRLNTCPMCR) adopts an RING-type zinc-finger fold.

Belongs to the IIV-6 157L family.

This Invertebrate iridescent virus 6 (IIV-6) protein is Putative RING finger protein 157L.